Here is a 129-residue protein sequence, read N- to C-terminus: uncharacterized protein (129 aa).

This is an uncharacterized protein from Mycoplasma pneumoniae (strain ATCC 29342 / M129 / Subtype 1) (Mycoplasmoides pneumoniae).